A 251-amino-acid polypeptide reads, in one-letter code: ATP synthase subunit a, chloroplastic (251 aa).

The next 6 helical transmembrane spans lie at 3-23, 38-58, 99-119, 138-158, 203-223, and 224-244; these read IVLL…IANV, IHGQ…FLSI, VPYI…GALI, INTT…AGLN, LVVA…LIFL, and GLFT…SYIG.

The protein belongs to the ATPase A chain family. As to quaternary structure, F-type ATPases have 2 components, CF(1) - the catalytic core - and CF(0) - the membrane proton channel. CF(1) has five subunits: alpha(3), beta(3), gamma(1), delta(1), epsilon(1). CF(0) has four main subunits: a, b, b' and c.

The protein resides in the plastid. It is found in the chloroplast thylakoid membrane. Functionally, key component of the proton channel; it plays a direct role in the translocation of protons across the membrane. The chain is ATP synthase subunit a, chloroplastic from Euglena gracilis.